A 213-amino-acid polypeptide reads, in one-letter code: Na(+)-translocating NADH-quinone reductase subunit D (213 aa).

Helical transmembrane passes span 21–41 (PLIAILGICSALAVTTTVNTA), 42–62 (ITMGLAVSFVTGCSSFFVSLL), 69–86 (SVRMITQLIIISLFVIVI), 101–121 (LSVFVGLIITNCIVMGRAESL), 131–151 (FLDGLASGLGYGWVLVTVSIV), and 183–203 (FGLMVLAPSAFFLLGIMIWGV).

Belongs to the NqrDE/RnfAE family. In terms of assembly, composed of six subunits; NqrA, NqrB, NqrC, NqrD, NqrE and NqrF.

The protein resides in the cell inner membrane. It carries out the reaction a ubiquinone + n Na(+)(in) + NADH + H(+) = a ubiquinol + n Na(+)(out) + NAD(+). Its function is as follows. NQR complex catalyzes the reduction of ubiquinone-1 to ubiquinol by two successive reactions, coupled with the transport of Na(+) ions from the cytoplasm to the periplasm. NqrA to NqrE are probably involved in the second step, the conversion of ubisemiquinone to ubiquinol. This Chlamydia caviae (strain ATCC VR-813 / DSM 19441 / 03DC25 / GPIC) (Chlamydophila caviae) protein is Na(+)-translocating NADH-quinone reductase subunit D.